Reading from the N-terminus, the 107-residue chain is Ferredoxin (107 aa).

4Fe-4S ferredoxin-type domains lie at 2–30 and 31–60; these read TYVV…YEGE and FMLV…PETP. [3Fe-4S] cluster-binding residues include C9 and C17. Residues C21, C40, C43, and C46 each contribute to the [4Fe-4S] cluster site. C50 is a [3Fe-4S] cluster binding site.

[4Fe-4S] cluster serves as cofactor. The cofactor is [3Fe-4S] cluster.

Functionally, ferredoxins are iron-sulfur proteins that transfer electrons in a wide variety of metabolic reactions. The polypeptide is Ferredoxin (fdxA) (Rickettsia bellii (strain RML369-C)).